A 469-amino-acid polypeptide reads, in one-letter code: uncharacterized protein (469 aa).

Disordered regions lie at residues 248-314 and 327-418; these read RDDN…EPES and QMDQ…PRPT. Polar residues-rich tracts occupy residues 292–305 and 350–365; these read ESSN…NAAS and TARQ…PNTV. The segment covering 366–377 has biased composition (low complexity); the sequence is TATSASTPASTS.

This is an uncharacterized protein from Cryphonectria parasitica (Chestnut blight fungus).